Here is a 77-residue protein sequence, read N- to C-terminus: Putative antitoxin MazE7 (77 aa).

A disordered region spans residues 49-77 (REASHAETTTQAVRDEDREWEGTVGDGLG).

As to quaternary structure, forms a complex with cognate toxin MazF7.

In terms of biological role, antitoxin component of a type II toxin-antitoxin (TA) system. The polypeptide is Putative antitoxin MazE7 (mazE7) (Mycobacterium tuberculosis (strain CDC 1551 / Oshkosh)).